Reading from the N-terminus, the 821-residue chain is Tip elongation aberrant protein Tea4 (821 aa).

Polar residues-rich tracts occupy residues Met-1–Asp-11 and Asp-21–Ile-31. A disordered region spans residues Met-1–Ser-36. The residue at position 35 (Tyr-35) is a Phosphotyrosine. Residue Ser-36 is modified to Phosphoserine. Tyr-40 bears the Phosphotyrosine mark. The disordered stretch occupies residues Ile-51–Ser-79. Residues Gly-53–Ser-67 are compositionally biased toward polar residues. The region spanning Ile-130–Glu-191 is the SH3 domain. 5 disordered regions span residues Leu-267 to Thr-292, Ser-333 to Ala-352, Asp-473 to Asn-500, Ser-529 to Leu-570, and Asp-664 to Ser-697. A compositionally biased stretch (low complexity) spans Glu-268–Glu-282. A compositionally biased stretch (basic and acidic residues) spans Tyr-283 to Thr-292. Composition is skewed to polar residues over residues Ser-333–Ser-350 and Asp-473–Ala-484. The interaction with tea1 stretch occupies residues Leu-527–Arg-821. The segment covering Ser-529–Pro-541 has biased composition (low complexity). The segment covering Glu-554–Glu-563 has biased composition (basic and acidic residues). Residues Lys-599–Arg-821 form an interaction with win1 region. The segment covering Ala-665 to Ile-674 has biased composition (low complexity). Positions Ser-675–Glu-687 are enriched in basic and acidic residues.

An essential component of the tea1 cell-end complex. Interacts with win1, tea1 and for3. Interacts with tip1 in the presence of tea1.

The protein resides in the cytoplasm. It localises to the cytoskeleton. In terms of biological role, cell polarity factor essential for the bipolar localization and function of structures containing the cell-end marker tea1 during the normal cell cycle. Regulates cell polarity in complex with tea1 and together with the stress signaling MAPK cascade, contributes to cell polarity maintenance under stress conditions. Required for the localization of for3 at the cell tip specifically during initiation of bipolar growth. During the new end take off (NETO), formation of a protein complex that includes tea1, tea4 and for3 is necessary and sufficient for the establishment of cell polarity and localized actin assembly at new cell ends. The chain is Tip elongation aberrant protein Tea4 from Schizosaccharomyces pombe (strain 972 / ATCC 24843) (Fission yeast).